A 216-amino-acid chain; its full sequence is Probable chemoreceptor glutamine deamidase CheD (216 aa).

Belongs to the CheD family.

It catalyses the reaction L-glutaminyl-[protein] + H2O = L-glutamyl-[protein] + NH4(+). In terms of biological role, probably deamidates glutamine residues to glutamate on methyl-accepting chemotaxis receptors (MCPs), playing an important role in chemotaxis. In Halorhodospira halophila (strain DSM 244 / SL1) (Ectothiorhodospira halophila (strain DSM 244 / SL1)), this protein is Probable chemoreceptor glutamine deamidase CheD.